Reading from the N-terminus, the 211-residue chain is Thymidylate kinase (211 aa).

An ATP-binding site is contributed by 11-18; that stretch reads GPDGAGKT.

It belongs to the thymidylate kinase family.

It carries out the reaction dTMP + ATP = dTDP + ADP. Phosphorylation of dTMP to form dTDP in both de novo and salvage pathways of dTTP synthesis. The chain is Thymidylate kinase from Streptococcus agalactiae serotype Ia (strain ATCC 27591 / A909 / CDC SS700).